The sequence spans 546 residues: Chaperonin GroEL (546 aa).

ATP contacts are provided by residues Thr30–Pro33, Lys51, Asp87–Thr91, Gly415, and Asp495.

The protein belongs to the chaperonin (HSP60) family. Forms a cylinder of 14 subunits composed of two heptameric rings stacked back-to-back. Interacts with the co-chaperonin GroES.

It localises to the cytoplasm. The catalysed reaction is ATP + H2O + a folded polypeptide = ADP + phosphate + an unfolded polypeptide.. Together with its co-chaperonin GroES, plays an essential role in assisting protein folding. The GroEL-GroES system forms a nano-cage that allows encapsulation of the non-native substrate proteins and provides a physical environment optimized to promote and accelerate protein folding. The polypeptide is Chaperonin GroEL (Brucella suis (strain ATCC 23445 / NCTC 10510)).